Here is a 1353-residue protein sequence, read N- to C-terminus: Stress response protein NST1 (1353 aa).

Over residues 1 to 12 the composition is skewed to polar residues; sequence MSSKSQQPPTGL. Disordered regions lie at residues 1–66, 216–422, 503–522, 531–618, 652–694, 727–882, 979–1119, 1140–1276, and 1308–1337; these read MSSK…FFNF, NANA…TQSS, NGLRPPPSGAGPFPGSVEVD, DHRA…SFGS, RRSV…AEEG, LREL…AKET, GLKS…DDAF, GSLI…GAGV, and GGTAGSGLVQGHVGGGGYSQGLFSPQHQQQ. A compositionally biased stretch (basic residues) spans 16–25; sequence AAKKRAKKAA. Positions 26–45 are enriched in low complexity; it reads KQSQNPQPQSAPQTSSQTPA. Residues 46 to 59 show a composition bias toward pro residues; it reads SVPPLPPASVPDPL. Residues 218–229 are compositionally biased toward polar residues; it reads NARSFPSPQQTI. A compositionally biased stretch (acidic residues) spans 242–254; the sequence is REEEYDDEEEIEE. Over residues 268 to 277 the composition is skewed to basic residues; sequence KKNKKKKKKG. The span at 287–300 shows a compositional bias: pro residues; that stretch reads VEPPAPLPPLPPPS. Residues 317 to 330 are compositionally biased toward low complexity; it reads LPTHQPQPLSQQPP. The segment covering 331–349 has biased composition (pro residues); that stretch reads SLNPLPPPAPASAPTPTPP. Low complexity predominate over residues 368-388; it reads PARSARAAGKAPASAAPPHNA. Basic and acidic residues predominate over residues 531–541; sequence DHRAPELHDHD. Positions 542-583 are enriched in acidic residues; that stretch reads PDDLDGEESEEYDDDDDYADDDELDDDDIGTDEADVGDEIDE. Positions 654–665 are enriched in basic and acidic residues; the sequence is SVREEQNLRDMQ. Positions 666–681 are enriched in acidic residues; that stretch reads EETDEEEEEEDDDESR. Basic and acidic residues-rich tracts occupy residues 682–694, 727–750, and 760–882; these read DEPMTEKERAEEG, LRELEEEEDSKRAKEEKKAKEAQK, and QKAE…AKET. Residues 713–944 adopt a coiled-coil conformation; the sequence is AYRERVAKQR…AAQQAQRERA (232 aa). Over residues 1009–1021 the composition is skewed to polar residues; the sequence is TNATPGRSMQKTP. Residues 1154–1165 are compositionally biased toward pro residues; that stretch reads PTPPAPIAPPNL. Polar residues-rich tracts occupy residues 1174 to 1187 and 1209 to 1220; these read SDGQTSGPNVLRST and QPQQRRPTTSWD.

Belongs to the NST1 family.

It localises to the cytoplasm. May act as a negative regulator of salt tolerance. The polypeptide is Stress response protein NST1 (NST1) (Cryptococcus neoformans var. neoformans serotype D (strain B-3501A) (Filobasidiella neoformans)).